Consider the following 386-residue polypeptide: MKDCEYQQISPGAAPPPASPGVHRPGPAAPPGPSPGPAPGAPRWSVSGSGSGSGSGSGSLGRRPRRKWEVFPGRNRFYCGGRLMLAGHGGVFALTLLLILSTTILFFIFDCPYLARTLTLAIPIIAAILFFFVMSCLLQTSFTDPGILPRATICEAAALEKQIDNTGSSTYRPPPRTREVMINGQMVKLKYCFTCKMFRPPRTSHCSVCDNCVERFDHHCPWVGNCVGRRNYRFFYAFILSLSFLTAFIFACVVTHLTLLSQGSNFLSALNKTPAGVLELVICFFSIWSILGLSGFHTYLVASNLTTNEDIKGSWSSKRGGEASVNPYSHKSIITNCCAVLCGPLPPSLIDRRGFVQSDTVLPSPIRSDEPACGAKPDASMVGGHP.

The segment at 1 to 65 (MKDCEYQQIS…GSGSLGRRPR (65 aa)) is disordered. Topologically, residues 1–88 (MKDCEYQQIS…CGGRLMLAGH (88 aa)) are cytoplasmic. Phosphoserine is present on serine 19. Over residues 27–40 (PAAPPGPSPGPAPG) the composition is skewed to pro residues. Gly residues predominate over residues 49–59 (SGSGSGSGSGS). Residues 89–109 (GGVFALTLLLILSTTILFFIF) traverse the membrane as a helical segment. Residues 110–117 (DCPYLART) are Lumenal-facing. The helical transmembrane segment at 118–138 (LTLAIPIIAAILFFFVMSCLL) threads the bilayer. At 139–233 (QTSFTDPGIL…GNCVGRRNYR (95 aa)) the chain is on the cytoplasmic side. Residues 190 to 240 (KYCFTCKMFRPPRTSHCSVCDNCVERFDHHCPWVGNCVGRRNYRFFYAFIL) enclose the DHHC domain. Catalysis depends on cysteine 220, which acts as the S-palmitoyl cysteine intermediate. Residues 234–254 (FFYAFILSLSFLTAFIFACVV) form a helical membrane-spanning segment. Topologically, residues 255–275 (THLTLLSQGSNFLSALNKTPA) are lumenal. Residues 276 to 296 (GVLELVICFFSIWSILGLSGF) form a helical membrane-spanning segment. At 297–386 (HTYLVASNLT…PDASMVGGHP (90 aa)) the chain is on the cytoplasmic side. The interval 362–386 (LPSPIRSDEPACGAKPDASMVGGHP) is disordered.

Belongs to the DHHC palmitoyltransferase family. ERF2/ZDHHC9 subfamily.

Its subcellular location is the golgi apparatus membrane. It catalyses the reaction L-cysteinyl-[protein] + hexadecanoyl-CoA = S-hexadecanoyl-L-cysteinyl-[protein] + CoA. Palmitoyltransferase that catalyzes the addition of palmitate onto various protein substrates, such as CGAS, HRAS and LCK. Acts as a negative regulator of the cGAS-STING pathway be mediating palmitoylation and inactivation of CGAS. May also have a palmitoyltransferase activity toward the beta-2 adrenergic receptor/ADRB2 and therefore regulate G protein-coupled receptor signaling. In Rattus norvegicus (Rat), this protein is Palmitoyltransferase ZDHHC18.